The primary structure comprises 426 residues: Fatty alcohol:caffeoyl-CoA acyltransferase (426 aa).

Residues H162 and D374 each act as proton acceptor in the active site.

The protein belongs to the plant acyltransferase family. As to expression, expressed in the outermost circumference of mature roots, the endodermis of young roots and in the seed coat of developing seeds. Expressed in outer integument layer 1 of the seed coat.

Functionally, involved in the synthesis of alkyl hydroxycinnamates in root waxes. Functions as a fatty alcohol:hydroxy cinnamoyl-CoA acyltransferase with apparent preference for caffeoyl-CoA. In Arabidopsis thaliana (Mouse-ear cress), this protein is Fatty alcohol:caffeoyl-CoA acyltransferase.